Reading from the N-terminus, the 331-residue chain is Ribosomal RNA small subunit methyltransferase H (331 aa).

S-adenosyl-L-methionine is bound by residues 38-40, D56, F83, D100, and Q107; that span reads GGY. A disordered region spans residues 287–331; that stretch reads DEAELAENPRARSARLRVGVRTDAPAGKVDPQALGTPLIPKKGRR.

Belongs to the methyltransferase superfamily. RsmH family.

The protein localises to the cytoplasm. The catalysed reaction is cytidine(1402) in 16S rRNA + S-adenosyl-L-methionine = N(4)-methylcytidine(1402) in 16S rRNA + S-adenosyl-L-homocysteine + H(+). In terms of biological role, specifically methylates the N4 position of cytidine in position 1402 (C1402) of 16S rRNA. The polypeptide is Ribosomal RNA small subunit methyltransferase H (Cereibacter sphaeroides (strain KD131 / KCTC 12085) (Rhodobacter sphaeroides)).